We begin with the raw amino-acid sequence, 290 residues long: Aquaporin PIP2-1 (290 aa).

Residues Met1–Asp20 form a disordered region. The next 2 membrane-spanning stretches (helical) occupy residues Ala43–Ile63 and Cys80–Val100. The NPA 1 motif lies at Asn112 to Ala114. A run of 3 helical transmembrane segments spans residues Leu131–Phe151, Gly173–Ala193, and Val205–Ile225. The NPA 2 signature appears at Asn233–Ala235. A helical transmembrane segment spans residues Ile255 to Leu275.

The protein belongs to the MIP/aquaporin (TC 1.A.8) family. PIP (TC 1.A.8.11) subfamily. In terms of assembly, homomers. Can interact with PIP1-2 to form heteromers. As to expression, expressed in roots.

The protein localises to the cell membrane. In terms of biological role, water channel required to facilitate the transport of water across cell membrane. Active as homomers. Increased activity when heteromerization with PIP1-2. The protein is Aquaporin PIP2-1 (PIP2-1) of Zea mays (Maize).